The primary structure comprises 212 residues: External core antigen (212 aa).

Residues 1–19 form the signal peptide; it reads MQLFHLCLIISCSCPTVQA. The HBEAG stretch occupies residues 25 to 27; it reads GWL. The segment at 165–212 is disordered; the sequence is NAPILSTLPETTVVRRRGRSPRRRTPSPRRRRSQSPRRRRSQSRESQC. The segment covering 178 to 205 has biased composition (basic residues); sequence VRRRGRSPRRRTPSPRRRRSQSPRRRRS. The 1; half-length repeat unit spans residues 184 to 190; sequence SPRRRTP. The segment at 184–206 is 3 X 8 AA repeats of S-P-R-R-R-R-S-Q; it reads SPRRRTPSPRRRRSQSPRRRRSQ. A propeptide spanning residues 184–212 is cleaved from the precursor; sequence SPRRRTPSPRRRRSQSPRRRRSQSRESQC. A run of 2 repeats spans residues 191–198 and 199–206.

This sequence belongs to the orthohepadnavirus precore antigen family. Homodimerizes. Phosphorylated. Post-translationally, cleaved by host furin.

It is found in the secreted. It localises to the host nucleus. Functionally, may regulate immune response to the intracellular capsid in acting as a T-cell tolerogen, by having an immunoregulatory effect which prevents destruction of infected cells by cytotoxic T-cells. This immune regulation may predispose to chronicity during perinatal infections and prevent severe liver injury during adult infections. This chain is External core antigen, found in Hepatitis B virus genotype C subtype ayw (isolate China/Tibet127/2002) (HBV-C).